The primary structure comprises 681 residues: 2-(S-pantetheinyl)-carbapenam-3-carboxylate methyltransferase (681 aa).

In terms of domain architecture, B12-binding spans 1 to 144 (MTVPAARSGR…IERLADHPDY (144 aa)). Cob(II)alamin contacts are provided by N18, S72, Y74, V75, H103, G126, and E127. The Radical SAM core domain occupies 192–417 (RDLRFYALWE…RLYVEEPGTP (226 aa)). Positions 206 and 210 each coordinate [4Fe-4S] cluster. F212 contacts 5'-deoxyadenosine. C213 lines the [4Fe-4S] cluster pocket. Residues D214 and C249 each contribute to the cob(II)alamin site. 5'-deoxyadenosine-binding residues include Q312, E349, and G384.

Belongs to the methyltransferase superfamily. The cofactor is [4Fe-4S] cluster. Cob(II)alamin is required as a cofactor.

The enzyme catalyses (2R,3R,5S)-2-(S-pantetheinyl)-carbapenam-3-carboxylate + AH2 + 2 S-adenosyl-L-methionine = (2R,3R,5S,6R)-6-(methyl)-2-(S-pantetheinyl)-carbapenam-3-carboxylate + 5'-deoxyadenosine + L-methionine + A + S-adenosyl-L-homocysteine + 2 H(+). It carries out the reaction (2R,3R,5S,6R)-6-(methyl)-2-(S-pantetheinyl)-carbapenam-3-carboxylate + AH2 + 2 S-adenosyl-L-methionine = (2R,3R,5S,6R)-6-(ethyl)-2-(S-pantetheinyl)-carbapenam-3-carboxylate + 5'-deoxyadenosine + L-methionine + A + S-adenosyl-L-homocysteine + 2 H(+). The protein operates within antibiotic biosynthesis. In terms of biological role, methyltransferase involved in the biosynthesis of the beta-lactam carbapenem antibiotic thienamycin. Catalyzes two consecutive S-adenosyl-L-methionine-dependent methylations to build out the C6-ethyl side chain in a stereocontrolled manner. In vitro can use methyl viologen and NADPH as the iron-sulfur cluster reductants. The polypeptide is 2-(S-pantetheinyl)-carbapenam-3-carboxylate methyltransferase (Streptantibioticus cattleyicolor (strain ATCC 35852 / DSM 46488 / JCM 4925 / NBRC 14057 / NRRL 8057) (Streptomyces cattleya)).